A 667-amino-acid chain; its full sequence is UvrABC system protein B (667 aa).

A Helicase ATP-binding domain is found at 25-180; sequence DSLQNQHRFQ…LLRALVSVQY (156 aa). Residue 38–45 coordinates ATP; it reads GATGTGKT. The short motif at 91–114 is the Beta-hairpin element; it reads YYDYYQPEAYIPVSDTYIEKSSSI. The Helicase C-terminal domain occupies 429–595; it reads QVDDLLGEIK…PIVKRSSNSI (167 aa). A UVR domain is found at 626-661; it reads PELIQQLEAQMKEAAKNLEFESAAKYRDRIKQLRDK.

The protein belongs to the UvrB family. As to quaternary structure, forms a heterotetramer with UvrA during the search for lesions. Interacts with UvrC in an incision complex.

It localises to the cytoplasm. Functionally, the UvrABC repair system catalyzes the recognition and processing of DNA lesions. A damage recognition complex composed of 2 UvrA and 2 UvrB subunits scans DNA for abnormalities. Upon binding of the UvrA(2)B(2) complex to a putative damaged site, the DNA wraps around one UvrB monomer. DNA wrap is dependent on ATP binding by UvrB and probably causes local melting of the DNA helix, facilitating insertion of UvrB beta-hairpin between the DNA strands. Then UvrB probes one DNA strand for the presence of a lesion. If a lesion is found the UvrA subunits dissociate and the UvrB-DNA preincision complex is formed. This complex is subsequently bound by UvrC and the second UvrB is released. If no lesion is found, the DNA wraps around the other UvrB subunit that will check the other stand for damage. The chain is UvrABC system protein B from Microcystis aeruginosa (strain NIES-843 / IAM M-2473).